The sequence spans 206 residues: N-(5'-phosphoribosyl)anthranilate isomerase (206 aa).

Belongs to the TrpF family.

The enzyme catalyses N-(5-phospho-beta-D-ribosyl)anthranilate = 1-(2-carboxyphenylamino)-1-deoxy-D-ribulose 5-phosphate. It functions in the pathway amino-acid biosynthesis; L-tryptophan biosynthesis; L-tryptophan from chorismate: step 3/5. The polypeptide is N-(5'-phosphoribosyl)anthranilate isomerase (Pseudomonas putida (strain W619)).